Reading from the N-terminus, the 393-residue chain is Acetylornithine aminotransferase 1 (393 aa).

Arg131 is a N(2)-acetyl-L-ornithine binding site. 215 to 218 (DEVQ) contributes to the pyridoxal 5'-phosphate binding site. Lys244 bears the N6-(pyridoxal phosphate)lysine mark. A N(2)-acetyl-L-ornithine-binding site is contributed by Thr272. Residue Thr273 participates in pyridoxal 5'-phosphate binding.

It belongs to the class-III pyridoxal-phosphate-dependent aminotransferase family. ArgD subfamily. In terms of assembly, homodimer. The cofactor is pyridoxal 5'-phosphate.

The protein resides in the cytoplasm. The enzyme catalyses N(2)-acetyl-L-ornithine + 2-oxoglutarate = N-acetyl-L-glutamate 5-semialdehyde + L-glutamate. It participates in amino-acid biosynthesis; L-arginine biosynthesis; N(2)-acetyl-L-ornithine from L-glutamate: step 4/4. This Bordetella parapertussis (strain 12822 / ATCC BAA-587 / NCTC 13253) protein is Acetylornithine aminotransferase 1.